The chain runs to 466 residues: tRNA modification GTPase MnmE (466 aa).

(6S)-5-formyl-5,6,7,8-tetrahydrofolate contacts are provided by Arg-24, Glu-85, and Lys-128. One can recognise a TrmE-type G domain in the interval 224 to 384; sequence GLNIVLAGQP…LRTELLHLVG (161 aa). Asn-234 lines the K(+) pocket. GTP-binding positions include 234–239, 253–259, and 278–281; these read NVGKSS, TPIAGTT, and DTAG. Ser-238 contributes to the Mg(2+) binding site. Thr-253, Ile-255, and Thr-258 together coordinate K(+). Position 259 (Thr-259) interacts with Mg(2+). Lys-466 contacts (6S)-5-formyl-5,6,7,8-tetrahydrofolate.

This sequence belongs to the TRAFAC class TrmE-Era-EngA-EngB-Septin-like GTPase superfamily. TrmE GTPase family. Homodimer. Heterotetramer of two MnmE and two MnmG subunits. It depends on K(+) as a cofactor.

It localises to the cytoplasm. Its function is as follows. Exhibits a very high intrinsic GTPase hydrolysis rate. Involved in the addition of a carboxymethylaminomethyl (cmnm) group at the wobble position (U34) of certain tRNAs, forming tRNA-cmnm(5)s(2)U34. The protein is tRNA modification GTPase MnmE of Herminiimonas arsenicoxydans.